Reading from the N-terminus, the 107-residue chain is DNA-directed RNA polymerase subunit omega (107 aa).

It belongs to the RNA polymerase subunit omega family. As to quaternary structure, the RNAP catalytic core consists of 2 alpha, 1 beta, 1 beta' and 1 omega subunit. When a sigma factor is associated with the core the holoenzyme is formed, which can initiate transcription.

The catalysed reaction is RNA(n) + a ribonucleoside 5'-triphosphate = RNA(n+1) + diphosphate. Promotes RNA polymerase assembly. Latches the N- and C-terminal regions of the beta' subunit thereby facilitating its interaction with the beta and alpha subunits. The protein is DNA-directed RNA polymerase subunit omega of Mycolicibacterium smegmatis (strain ATCC 700084 / mc(2)155) (Mycobacterium smegmatis).